A 457-amino-acid polypeptide reads, in one-letter code: Metacaspase-1 (457 aa).

A disordered region spans residues Met-1–Ser-149. The span at Pro-7–Gly-18 shows a compositional bias: gly residues. Residues Arg-20–Gln-56 show a composition bias toward pro residues. Low complexity predominate over residues Gln-57–Tyr-83. Active-site residues include His-247 and Cys-303.

This sequence belongs to the peptidase C14B family.

In terms of biological role, involved in cell death (apoptosis). The sequence is that of Metacaspase-1 (MCA1) from Cryptococcus neoformans var. neoformans serotype D (strain JEC21 / ATCC MYA-565) (Filobasidiella neoformans).